The primary structure comprises 374 residues: Amino acid binding protein (374 aa).

Residues 1-27 form the signal peptide; sequence MSKKLFRKGILALAVSSVMGLSTHALA.

It belongs to the leucine-binding protein family.

It is found in the periplasm. Binds primarily proteinogenic amino acids. The sequence is that of Amino acid binding protein from Pseudomonas aeruginosa (strain ATCC 15692 / DSM 22644 / CIP 104116 / JCM 14847 / LMG 12228 / 1C / PRS 101 / PAO1).